The primary structure comprises 1374 residues: DNA-directed RNA polymerase subunit beta (1374 aa).

The protein belongs to the RNA polymerase beta chain family. As to quaternary structure, the RNAP catalytic core consists of 2 alpha, 1 beta, 1 beta' and 1 omega subunit. When a sigma factor is associated with the core the holoenzyme is formed, which can initiate transcription.

The catalysed reaction is RNA(n) + a ribonucleoside 5'-triphosphate = RNA(n+1) + diphosphate. Functionally, DNA-dependent RNA polymerase catalyzes the transcription of DNA into RNA using the four ribonucleoside triphosphates as substrates. In Rhodopseudomonas palustris (strain BisB5), this protein is DNA-directed RNA polymerase subunit beta.